The primary structure comprises 212 residues: Small ribosomal subunit protein eS1 (212 aa).

This sequence belongs to the eukaryotic ribosomal protein eS1 family.

This chain is Small ribosomal subunit protein eS1, found in Ignicoccus hospitalis (strain KIN4/I / DSM 18386 / JCM 14125).